A 37-amino-acid polypeptide reads, in one-letter code: Cytochrome b6-f complex subunit 5 (37 aa).

A helical membrane pass occupies residues 5-25 (FLFGIVLGLIPITLAGLFVTA).

The protein belongs to the PetG family. The 4 large subunits of the cytochrome b6-f complex are cytochrome b6, subunit IV (17 kDa polypeptide, PetD), cytochrome f and the Rieske protein, while the 4 small subunits are PetG, PetL, PetM and PetN. The complex functions as a dimer.

The protein resides in the plastid. The protein localises to the chloroplast thylakoid membrane. In terms of biological role, component of the cytochrome b6-f complex, which mediates electron transfer between photosystem II (PSII) and photosystem I (PSI), cyclic electron flow around PSI, and state transitions. PetG is required for either the stability or assembly of the cytochrome b6-f complex. The polypeptide is Cytochrome b6-f complex subunit 5 (Solanum lycopersicum (Tomato)).